A 1073-amino-acid polypeptide reads, in one-letter code: Ring-infected erythrocyte surface antigen (1073 aa).

Residues 1 to 65 form the signal peptide; that stretch reads MRPFHAYSWI…IIGILYIILN (65 aa). An N-linked (GlcNAc...) asparagine glycan is attached at asparagine 71. The segment covering 428 to 444 has biased composition (acidic residues); the sequence is DTSEEESVEENEEEHTV. Residues 428-514 are disordered; that stretch reads DTSEEESVEE…SDVQQTSEAA (87 aa). The tandem repeats 1 stretch occupies residues 436-504; it reads EENEEEHTVD…VAEEHVEEPA (69 aa). A compositionally biased stretch (basic and acidic residues) spans 445-456; the sequence is DDEHVEEHTADD. Acidic residues predominate over residues 457–470; that stretch reads EHVEEPTVADDEHV. The segment covering 476 to 502 has biased composition (basic and acidic residues); it reads ADEHVEEPTVAEEHVEEPTVAEEHVEE. The J domain maps to 521-589; that stretch reads DTLYYDILGV…KRWYNKYGYD (69 aa). N-linked (GlcNAc...) asparagine glycans are attached at residues asparagine 639, asparagine 773, and asparagine 777. The interval 891 to 1073 is tandem repeats 2; that stretch reads NAEENVEHDA…VEEHNEEYDE (183 aa). Residues 894–930 show a composition bias toward basic and acidic residues; the sequence is ENVEHDAEENVEHDAEENVEHDAEENVEHDAEENVEH. The tract at residues 894–1073 is disordered; that stretch reads ENVEHDAEEN…VEEHNEEYDE (180 aa). The span at 931–1073 shows a compositional bias: acidic residues; that stretch reads DAEENVEENV…VEEHNEEYDE (143 aa).

In terms of processing, the Tyr residues in the variant tetrameric sequences in the RESA repeat are possibly phosphorylated (by homology with band 3).

It localises to the cell membrane. Its function is as follows. May disrupt the normal intermolecular interactions of the cytoplasmic domain of band 3 and thereby facilitate the invagination of the red cell membrane which is necessary for the formation of the parasitophorous vacuole. The chain is Ring-infected erythrocyte surface antigen (RESA) from Plasmodium falciparum (isolate FC27 / Papua New Guinea).